A 659-amino-acid polypeptide reads, in one-letter code: 1,4-alpha-glucan branching enzyme GlgB 2 (659 aa).

Positions 1–26 are disordered; the sequence is MRNYKELKHEKNGNVTEKIGENKGKS. Asp-337 acts as the Nucleophile in catalysis. Glu-390 functions as the Proton donor in the catalytic mechanism.

It belongs to the glycosyl hydrolase 13 family. GlgB subfamily. As to quaternary structure, monomer.

The enzyme catalyses Transfers a segment of a (1-&gt;4)-alpha-D-glucan chain to a primary hydroxy group in a similar glucan chain.. It participates in glycan biosynthesis; glycogen biosynthesis. Its function is as follows. Catalyzes the formation of the alpha-1,6-glucosidic linkages in glycogen by scission of a 1,4-alpha-linked oligosaccharide from growing alpha-1,4-glucan chains and the subsequent attachment of the oligosaccharide to the alpha-1,6 position. In Clostridium perfringens (strain SM101 / Type A), this protein is 1,4-alpha-glucan branching enzyme GlgB 2.